A 68-amino-acid chain; its full sequence is Large ribosomal subunit protein bL31 (68 aa).

Residues cysteine 16, cysteine 18, cysteine 36, and cysteine 39 each coordinate Zn(2+).

Belongs to the bacterial ribosomal protein bL31 family. Type A subfamily. Part of the 50S ribosomal subunit. Requires Zn(2+) as cofactor.

Its function is as follows. Binds the 23S rRNA. The sequence is that of Large ribosomal subunit protein bL31 from Dictyoglomus turgidum (strain DSM 6724 / Z-1310).